Consider the following 537-residue polypeptide: Lysine--tRNA ligase (537 aa).

Positions 30–38 (PSGNIHIGN) match the 'HIGH' region motif. The 'KMSKS' region signature appears at 276–280 (AMSSS).

It belongs to the class-I aminoacyl-tRNA synthetase family.

Its subcellular location is the cytoplasm. The enzyme catalyses tRNA(Lys) + L-lysine + ATP = L-lysyl-tRNA(Lys) + AMP + diphosphate. The chain is Lysine--tRNA ligase from Methanosarcina barkeri.